We begin with the raw amino-acid sequence, 157 residues long: Endoribonuclease YbeY (157 aa).

Zn(2+) is bound by residues His-111, His-115, and His-121.

This sequence belongs to the endoribonuclease YbeY family. Zn(2+) is required as a cofactor.

The protein resides in the cytoplasm. Its function is as follows. Single strand-specific metallo-endoribonuclease involved in late-stage 70S ribosome quality control and in maturation of the 3' terminus of the 16S rRNA. In Pseudomonas entomophila (strain L48), this protein is Endoribonuclease YbeY.